A 167-amino-acid chain; its full sequence is SAR-endolysin (167 aa).

A helical; Signal-anchor for type II membrane protein transmembrane segment spans residues 11–31 (VIAAISGGAIAIASVLITGPG). Residues glutamate 37 and aspartate 46 each act as proton donor/acceptor in the active site.

It belongs to the glycosyl hydrolase 24 family.

It localises to the host cell inner membrane. The catalysed reaction is Hydrolysis of (1-&gt;4)-beta-linkages between N-acetylmuramic acid and N-acetyl-D-glucosamine residues in a peptidoglycan and between N-acetyl-D-glucosamine residues in chitodextrins.. Its function is as follows. Signal-arrest-release (SAR) endolysin with lysozyme activity that degrades host peptidoglycans and participates with the pinholin and spanin proteins in the sequential events which lead to programmed host cell lysis releasing the mature viral particles. Once the pinholin has permeabilized the host cell membrane, the SAR-endolysin is released into the periplasm where it breaks down the peptidoglycan layer. In Bacteriophage PS34, this protein is SAR-endolysin (19).